We begin with the raw amino-acid sequence, 419 residues long: MRTKIIAIIPARSGSKGLRNKNALMLIDKPLLAYTIEAALQSEMFEKVIVTTDSEQYGAIAESYGADFLLRPEELATDKASSFEFIKHALSIYTDYESFALLQPTSPFRDSTHIIEAVKLYQTLEKYQCVVSVTRSNKPSQIIRPLDDYSTLSFFDLDYSKYNRNSIVEYHPNGAIFIANKQHYLHTKHFFGRYSLAYIMDKESSLDIDDRMDFELAITIQQKKNRQKIDLYQNIHNRINEKRNEFDSVSDITLIGHSLFDYWDVKKINDIEVNNLGIAGINSKEYYEYIIEKELIVNFGEFVFIFFGTNDIVVSDWKKEDTLWYLKKTCQYIKKKNAASKIYLLSVPPVFGRIDRDNRIINDLNSYLRENVDFAKFISLDHVLKDSYGNLNKMYTYDGLHFNSNGYTVLENEIAEIVK.

The protein belongs to the CMP-NeuNAc synthase family. In terms of assembly, monomer. May form aggregates. It depends on Mg(2+) as a cofactor. The cofactor is Mn(2+).

The protein localises to the cytoplasm. The enzyme catalyses an N-acylneuraminate + CTP = a CMP-N-acyl-beta-neuraminate + diphosphate. Its activity is regulated as follows. Inhibited by the CTP analogs 5-mercuri-CTP and CTP-2',3'-dialdehyde. In terms of biological role, catalyzes the formation of CMP-N-acetylneuraminic acid (CMP-NeuNAc), which is essential for the formation of the capsule. The protein is N-acylneuraminate cytidylyltransferase (neuA) of Escherichia coli O18:K1:H7 (strain RS218 / NMEC).